A 108-amino-acid polypeptide reads, in one-letter code: uncharacterized protein (108 aa).

Over residues 48 to 73 (NSNIPSSSSSSPSFASFFSSTSTSAT) the composition is skewed to low complexity. The segment at 48–81 (NSNIPSSSSSSPSFASFFSSTSTSATLNGSSNNK) is disordered.

This is an uncharacterized protein from Dictyostelium discoideum (Social amoeba).